Reading from the N-terminus, the 194-residue chain is Fe/S biogenesis protein NfuA (194 aa).

Residues cysteine 151 and cysteine 154 each contribute to the [4Fe-4S] cluster site.

Belongs to the NfuA family. Homodimer. [4Fe-4S] cluster is required as a cofactor.

In terms of biological role, involved in iron-sulfur cluster biogenesis. Binds a 4Fe-4S cluster, can transfer this cluster to apoproteins, and thereby intervenes in the maturation of Fe/S proteins. Could also act as a scaffold/chaperone for damaged Fe/S proteins. In Vibrio vulnificus (strain CMCP6), this protein is Fe/S biogenesis protein NfuA.